A 317-amino-acid chain; its full sequence is AT-hook motif nuclear-localized protein 22 (317 aa).

Disordered regions lie at residues 22-41 and 48-106; these read HHQFQHQQQQQQQNHGHDID and LKRD…KPPI. The segment covering 26–35 has biased composition (low complexity); the sequence is QHQQQQQQQN. The span at 48-64 shows a compositional bias: basic and acidic residues; the sequence is LKRDRDADIDPNEHSSA. The segment covering 72-84 has biased composition (gly residues); the sequence is GSGGESGGGGGGD. Residues 89–101 constitute a DNA-binding region (a.T hook); the sequence is RRPRGRPAGSKNK. Residues 113–253 form the PPC domain; the sequence is ANALKSHVME…EDDQEEQTAG (141 aa). Positions 258-285 are disordered; the sequence is NIDGNATMGGGTQTQTQTQQQQQQQLMQ. Residues 270–282 show a composition bias toward low complexity; the sequence is QTQTQTQQQQQQQ.

Homodimer. Interacts with HDA1/HDA19, HDA6 and HDA9. As to expression, expressed at the hypocotyl-root transition zone and the root hair zone. Also detected in the inflorescence.

The protein localises to the nucleus. In terms of biological role, transcription factor that specifically binds AT-rich DNA sequences related to the nuclear matrix attachment regions (MARs). Binds an AT-rich DNA sequences in the FLOWERING LOCUS T (FT) promoter. Acts redundantly with AHL18, AHL27 and AHL29 in the regulation of flowering and regulation of the hypocotyl elongation. Plays a role in both photo- and skotomorphogenesis. Acts as a chromatin remodeling factor that modifies the architecture of FLOWERING LOCUS T (FT) chromatin by modulating both H3 acetylation and methylation leading to the regulation of FT expression during flowering induction. This chain is AT-hook motif nuclear-localized protein 22, found in Arabidopsis thaliana (Mouse-ear cress).